The following is a 510-amino-acid chain: Inositol-3-phosphate synthase 1 (510 aa).

NAD(+)-binding residues include glycine 70, glycine 71, asparagine 72, asparagine 73, aspartate 143, isoleucine 180, glutamine 190, arginine 193, threonine 230, alanine 231, asparagine 232, threonine 233, glycine 281, serine 282, aspartate 306, serine 309, asparagine 340, asparagine 341, aspartate 342, lysine 355, glycine 393, aspartate 394, aspartate 422, and serine 423.

The protein belongs to the myo-inositol 1-phosphate synthase family. Requires NAD(+) as cofactor.

The protein resides in the cytoplasm. It localises to the cytosol. The protein localises to the nucleus. The catalysed reaction is D-glucose 6-phosphate = 1D-myo-inositol 3-phosphate. It functions in the pathway polyol metabolism; myo-inositol biosynthesis; myo-inositol from D-glucose 6-phosphate: step 1/2. In terms of biological role, key enzyme in myo-inositol biosynthesis pathway that catalyzes the conversion of glucose 6-phosphate to 1-myo-inositol 1-phosphate in a NAD-dependent manner. May play a role in oxidative stress resistance and influences ascorbate levels. The chain is Inositol-3-phosphate synthase 1 from Populus euphratica (Euphrates poplar).